The chain runs to 476 residues: Ribosomal RNA small subunit methyltransferase F (476 aa).

S-adenosyl-L-methionine is bound by residues 124 to 130 (ASAPGSK), glutamate 148, aspartate 175, and aspartate 193. Cysteine 246 serves as the catalytic Nucleophile.

The protein belongs to the class I-like SAM-binding methyltransferase superfamily. RsmB/NOP family.

The protein resides in the cytoplasm. It catalyses the reaction cytidine(1407) in 16S rRNA + S-adenosyl-L-methionine = 5-methylcytidine(1407) in 16S rRNA + S-adenosyl-L-homocysteine + H(+). Specifically methylates the cytosine at position 1407 (m5C1407) of 16S rRNA. The protein is Ribosomal RNA small subunit methyltransferase F of Photobacterium profundum (strain SS9).